A 166-amino-acid chain; its full sequence is 2-amino-4-hydroxy-6-hydroxymethyldihydropteridine pyrophosphokinase (166 aa).

The protein belongs to the HPPK family.

It catalyses the reaction 6-hydroxymethyl-7,8-dihydropterin + ATP = (7,8-dihydropterin-6-yl)methyl diphosphate + AMP + H(+). It participates in cofactor biosynthesis; tetrahydrofolate biosynthesis; 2-amino-4-hydroxy-6-hydroxymethyl-7,8-dihydropteridine diphosphate from 7,8-dihydroneopterin triphosphate: step 4/4. Catalyzes the transfer of pyrophosphate from adenosine triphosphate (ATP) to 6-hydroxymethyl-7,8-dihydropterin, an enzymatic step in folate biosynthesis pathway. In Streptococcus pyogenes serotype M1, this protein is 2-amino-4-hydroxy-6-hydroxymethyldihydropteridine pyrophosphokinase (folK).